Reading from the N-terminus, the 554-residue chain is Dihydroxy-acid dehydratase (554 aa).

Cysteine 51 provides a ligand contact to [2Fe-2S] cluster. Position 83 (aspartate 83) interacts with Mg(2+). [2Fe-2S] cluster is bound at residue cysteine 124. The Mg(2+) site is built by aspartate 125 and lysine 126. Lysine 126 is modified (N6-carboxylysine). Cysteine 193 is a [2Fe-2S] cluster binding site. Residue glutamate 444 participates in Mg(2+) binding. Residue serine 470 is the Proton acceptor of the active site.

The protein belongs to the IlvD/Edd family. Homodimer. [2Fe-2S] cluster serves as cofactor. Requires Mg(2+) as cofactor.

It carries out the reaction (2R)-2,3-dihydroxy-3-methylbutanoate = 3-methyl-2-oxobutanoate + H2O. The catalysed reaction is (2R,3R)-2,3-dihydroxy-3-methylpentanoate = (S)-3-methyl-2-oxopentanoate + H2O. It functions in the pathway amino-acid biosynthesis; L-isoleucine biosynthesis; L-isoleucine from 2-oxobutanoate: step 3/4. Its pathway is amino-acid biosynthesis; L-valine biosynthesis; L-valine from pyruvate: step 3/4. Its function is as follows. Functions in the biosynthesis of branched-chain amino acids. Catalyzes the dehydration of (2R,3R)-2,3-dihydroxy-3-methylpentanoate (2,3-dihydroxy-3-methylvalerate) into 2-oxo-3-methylpentanoate (2-oxo-3-methylvalerate) and of (2R)-2,3-dihydroxy-3-methylbutanoate (2,3-dihydroxyisovalerate) into 2-oxo-3-methylbutanoate (2-oxoisovalerate), the penultimate precursor to L-isoleucine and L-valine, respectively. This is Dihydroxy-acid dehydratase from Vesicomyosocius okutanii subsp. Calyptogena okutanii (strain HA).